A 431-amino-acid polypeptide reads, in one-letter code: Saglin (431 aa).

An N-terminal signal peptide occupies residues 1–39; that stretch reads MSVRGYSGVQVISSRKHRSMSRLPTVLLLLASAAVLAAG. Residue N95 is glycosylated (N-linked (GlcNAc...) asparagine). Positions 120-169 form a coiled coil; the sequence is LDDAQRQMEQEHRQYAATLEEQLHAAQQETQQEQEMKKALQKQLDALTDS.

As to quaternary structure, homodimer; disulfide-linked. In terms of assembly, (Microbial infection) Interacts with Plasmodium berghei TRAP (via integrin-like A-domain); the interaction probably promotes sporozoite invasion of salivary gland. In terms of tissue distribution, female saliva (at protein level). Female salivary gland (at protein level).

It is found in the secreted. (Microbial infection) Facilitates invasion of mosquito salivary glands by Plasmodium yoelii sporozoites. Its function is as follows. (Microbial infection) Facilitates invasion of mosquito salivary glands by Plasmodium falciparum sporozoites. Functionally, (Microbial infection) Probably facilitates invasion of mosquito salivary glands by Plasmodium berghei sporozoites. The polypeptide is Saglin (Anopheles gambiae (African malaria mosquito)).